An 89-amino-acid chain; its full sequence is Small ribosomal subunit protein uS15 (89 aa).

This sequence belongs to the universal ribosomal protein uS15 family. Part of the 30S ribosomal subunit. Forms a bridge to the 50S subunit in the 70S ribosome, contacting the 23S rRNA.

One of the primary rRNA binding proteins, it binds directly to 16S rRNA where it helps nucleate assembly of the platform of the 30S subunit by binding and bridging several RNA helices of the 16S rRNA. Functionally, forms an intersubunit bridge (bridge B4) with the 23S rRNA of the 50S subunit in the ribosome. The chain is Small ribosomal subunit protein uS15 from Ralstonia nicotianae (strain ATCC BAA-1114 / GMI1000) (Ralstonia solanacearum).